The chain runs to 377 residues: Probable aspartic-type endopeptidase CTSD (377 aa).

The 292-residue stretch at 1–292 folds into the Peptidase A1 domain; that stretch reads SLIDTGASRT…DFDKNRVGLA (292 aa). Residue aspartate 4 is part of the active site. A glycan (N-linked (GlcNAc...) asparagine) is linked at asparagine 58. Aspartate 186 is a catalytic residue. The disordered stretch occupies residues 296–351; sequence YGETKDPPSSSHPPPAPTSNKASGGSPGLPEQSGTSSATTSTTGEPSSGSTASPSA. Residues 328-351 are compositionally biased toward low complexity; that stretch reads SGTSSATTSTTGEPSSGSTASPSA. Serine 350 is lipidated: GPI-anchor amidated serine. Residues 351 to 377 constitute a propeptide, removed in mature form; sequence AASSVSMSAWLSLAVFLSTASSLILWD.

The protein belongs to the peptidase A1 family.

It is found in the cell membrane. Functionally, secreted aspartic-type endopeptidase which is secreted and contributes to virulence. This Arthroderma otae (strain ATCC MYA-4605 / CBS 113480) (Microsporum canis) protein is Probable aspartic-type endopeptidase CTSD (CTSD).